Consider the following 679-residue polypeptide: Enzymatic polyprotein (679 aa).

The protease stretch occupies residues 40–130; the sequence is LHCFVDTGAS…LYEPFIQFTD (91 aa). Residue D45 is part of the active site. Residues 272 to 452 form the Reverse transcriptase domain; that stretch reads LKVIKPSKSP…KKINFLGLEI (181 aa).

It belongs to the caulimoviridae enzymatic polyprotein family.

The enzyme catalyses DNA(n) + a 2'-deoxyribonucleoside 5'-triphosphate = DNA(n+1) + diphosphate. In terms of biological role, encodes for at least two polypeptides: protease (PR) and reverse transcriptase (RT). The protease processes the polyprotein in cis. Reverse transcriptase is multifunctional enzyme that converts the viral RNA genome into dsDNA in viral cytoplasmic capsids. This enzyme displays a DNA polymerase activity that can copy either DNA or RNA templates, and a ribonuclease H (RNase H) activity that cleaves the RNA strand of RNA-DNA heteroduplexes in a partially processive 3'- to 5'-endonucleasic mode. Neo-synthesized pregenomic RNA (pgRNA) are encapsidated, and reverse-transcribed inside the nucleocapsid. Partial (+)DNA is synthesized from the (-)DNA template and generates the relaxed circular DNA (RC-DNA) genome. After budding and infection, the RC-DNA migrates in the nucleus, and is converted into a plasmid-like covalently closed circular DNA (cccDNA). The protein is Enzymatic polyprotein of Cauliflower mosaic virus (strain BBC) (CaMV).